Here is a 197-residue protein sequence, read N- to C-terminus: MKVLQEKILNEGKVLSGDVLKVDAFLNHQIDPVLMQEIGKEFAKRFKEENITKIVTIESSGIAPAVMAALELGVKVIFARKRKSLTLQDNMYVANVYSFTKQETNEISLSRNHIDESDRVLIIDDFLANGQAALGLMSLVEQAGASIAGIGIVIEKAFQDGGKKLREQGVRVESLAEIASLDNGTVTFVQHETAEVK.

Residues L20 and N27 each coordinate xanthine. 128–132 contacts 5-phospho-alpha-D-ribose 1-diphosphate; that stretch reads ANGQA. Residue K156 participates in xanthine binding.

This sequence belongs to the purine/pyrimidine phosphoribosyltransferase family. Xpt subfamily. In terms of assembly, homodimer.

Its subcellular location is the cytoplasm. The enzyme catalyses XMP + diphosphate = xanthine + 5-phospho-alpha-D-ribose 1-diphosphate. The protein operates within purine metabolism; XMP biosynthesis via salvage pathway; XMP from xanthine: step 1/1. Functionally, converts the preformed base xanthine, a product of nucleic acid breakdown, to xanthosine 5'-monophosphate (XMP), so it can be reused for RNA or DNA synthesis. This chain is Xanthine phosphoribosyltransferase, found in Bacillus cereus (strain ATCC 10987 / NRS 248).